We begin with the raw amino-acid sequence, 506 residues long: Maturase K (506 aa).

It belongs to the intron maturase 2 family. MatK subfamily.

It localises to the plastid. Its subcellular location is the chloroplast. In terms of biological role, usually encoded in the trnK tRNA gene intron. Probably assists in splicing its own and other chloroplast group II introns. The chain is Maturase K from Lathyrus tingitanus (Tangier pea).